The primary structure comprises 373 residues: Glutamate 5-kinase (373 aa).

An ATP-binding site is contributed by Lys15. Substrate is bound by residues Ser54, Asp141, and Asn153. Residues 173–174 (SD) and 215–221 (TGGMATK) each bind ATP. One can recognise a PUA domain in the interval 280–358 (RGKLLVDEGA…SEIEVVLGYK (79 aa)).

This sequence belongs to the glutamate 5-kinase family.

Its subcellular location is the cytoplasm. It catalyses the reaction L-glutamate + ATP = L-glutamyl 5-phosphate + ADP. It functions in the pathway amino-acid biosynthesis; L-proline biosynthesis; L-glutamate 5-semialdehyde from L-glutamate: step 1/2. Catalyzes the transfer of a phosphate group to glutamate to form L-glutamate 5-phosphate. The sequence is that of Glutamate 5-kinase from Syntrophotalea carbinolica (strain DSM 2380 / NBRC 103641 / GraBd1) (Pelobacter carbinolicus).